The primary structure comprises 680 residues: uncharacterized protein (680 aa).

It belongs to the HyuA family.

This is an uncharacterized protein from Methanocaldococcus jannaschii (strain ATCC 43067 / DSM 2661 / JAL-1 / JCM 10045 / NBRC 100440) (Methanococcus jannaschii).